A 203-amino-acid chain; its full sequence is Ribonuclease T (203 aa).

The 175-residue stretch at 11–185 (VVVDVETGGF…YDTEKTAELF (175 aa)) folds into the Exonuclease domain. The Mg(2+) site is built by Asp-14, Glu-16, His-172, and Asp-177. Catalysis depends on His-172, which acts as the Proton donor/acceptor.

It belongs to the RNase T family. Homodimer. Requires Mg(2+) as cofactor.

Its function is as follows. Trims short 3' overhangs of a variety of RNA species, leaving a one or two nucleotide 3' overhang. Responsible for the end-turnover of tRNA: specifically removes the terminal AMP residue from uncharged tRNA (tRNA-C-C-A). Also appears to be involved in tRNA biosynthesis. This chain is Ribonuclease T, found in Pseudomonas putida (strain ATCC 47054 / DSM 6125 / CFBP 8728 / NCIMB 11950 / KT2440).